A 172-amino-acid chain; its full sequence is Myosin regulatory light chain RLC-A (172 aa).

The segment covering 1–16 has biased composition (basic residues); that stretch reads MSSKRAKTKTTKKRPQ. A disordered region spans residues 1-20; the sequence is MSSKRAKTKTTKKRPQRATS. Thr-19 is subject to Phosphothreonine; by MLCK. Residue Ser-20 is modified to Phosphoserine; by MLCK. EF-hand domains are found at residues 29–64, 98–133, and 134–169; these read SQIQ…MGKN, DPED…MGDR, and FTDE…GAKD. Asp-42, Asn-44, Asp-46, and Asp-53 together coordinate Ca(2+).

As to quaternary structure, myosin is a hexamer of 2 heavy chains and 4 light chains. In terms of processing, phosphorylation increases the actin-activated myosin ATPase activity and thereby regulates the contractile activity.

Functionally, myosin regulatory subunit that plays an important role in regulation of both smooth muscle and nonmuscle cell contractile activity via its phosphorylation. Implicated in cytokinesis, receptor capping, and cell locomotion. The chain is Myosin regulatory light chain RLC-A (Rlc-a) from Rattus norvegicus (Rat).